Consider the following 366-residue polypeptide: Latent membrane protein 1 (366 aa).

At 1–23 the chain is on the cytoplasmic side; that stretch reads MERDLERGPPGPPRPPLGPPLSS. A helical membrane pass occupies residues 24 to 44; sequence SIGLALLLLLLALLFWLYIVL. Over 45–51 the chain is Extracellular; that stretch reads SNWTGGA. The chain crosses the membrane as a helical span at residues 52 to 72; it reads LLVLYSFALMLIIIILIIFIF. Over 73–75 the chain is Cytoplasmic; the sequence is RRD. A helical membrane pass occupies residues 76–96; the sequence is LLCPLGGLGLLLLMVTLLLIA. Over 97–106 the chain is Extracellular; sequence LWNLHGQALY. The helical transmembrane segment at 107 to 127 threads the bilayer; sequence LGIVLFIFGCLLVLGLWIYFL. Residues 128-139 lie on the Cytoplasmic side of the membrane; sequence EILWRLGATIWQ. The helical transmembrane segment at 140–160 threads the bilayer; it reads LLAFILAFFLAIILLIIALYL. The Extracellular portion of the chain corresponds to 161 to 163; the sequence is QQN. Residues 164–184 form a helical membrane-spanning segment; it reads WWTLLVDLLWLLLFMAILIWM. At 185–366 the chain is on the cytoplasmic side; it reads YFHGPRHTDE…HGPVQLSYYD (182 aa). Residues 194–232 form a CTAR1 region; that stretch reads EHHHDDSLPHPQQATDDSSHESDSNSNEGRHHLLVSGAG. Residues 194 to 366 form a disordered region; it reads EHHHDDSLPH…HGPVQLSYYD (173 aa). The short motif at 204 to 208 is the Interaction with host TRAF proteins element; that stretch reads PQQAT. A compositionally biased stretch (basic and acidic residues) spans 210–224; that stretch reads DSSHESDSNSNEGRH. 2 stretches are compositionally biased toward low complexity: residues 251–267 and 337–346; these read NGPQ…PQDP and PHLPTLLLGT. A CTAR2 region spans residues 332–366; sequence GGGGDPHLPTLLLGTSGSGGDDDDPHGPVQLSYYD.

The protein belongs to the herpesviridae LMP-1 family. In terms of assembly, interacts (via PXQXT motif) with host tumor necrosis factor receptor-associated factor (TRAF) proteins TRAF1, TRAF2, TRAF3 and TRAF5. Interacts with human protein ZMYND11; leading to negatively regulate NF-kappa-B activation. Interacts with host UBE2I; this interaction induces the sumoylation of various cellular proteins. Interacts with host IRF7. Ubiquitinated on the N-terminus.

Its subcellular location is the host cell membrane. Its function is as follows. Acts as a CD40 functional homolog to prevent apoptosis of infected B-lymphocytes and drive their proliferation. Functions as a constitutively active tumor necrosis factor receptor that induces the activation of several signaling pathways, including those of the NF-kappa-B family. LMP1 signaling leads to up-regulation of antiapoptotic proteins and provide growth signals in latently infected cells. Interacts with host UBE2I and subsequently affects the sumoylation state of several cellular proteins. For example, induces the sumoylation of host IRF7 thereby limiting its transcriptional activity and modulating the activation of innate immune responses. Also inhibits host IFN-alpha-stimulated STAT2 nuclear translocation and interferon-stimulated response element transcriptional activity by interacting with and inhibiting host TYK2. Induces SUMO expression during viral latency thereby dysregulating the host sumoylation processes. The polypeptide is Latent membrane protein 1 (LMP1) (Homo sapiens (Human)).